Here is a 486-residue protein sequence, read N- to C-terminus: Histidine--tRNA ligase, chloroplastic/mitochondrial (486 aa).

The protein belongs to the class-II aminoacyl-tRNA synthetase family.

It is found in the plastid. The protein localises to the chloroplast. The protein resides in the mitochondrion. It carries out the reaction tRNA(His) + L-histidine + ATP = L-histidyl-tRNA(His) + AMP + diphosphate + H(+). The polypeptide is Histidine--tRNA ligase, chloroplastic/mitochondrial (Arabidopsis thaliana (Mouse-ear cress)).